We begin with the raw amino-acid sequence, 541 residues long: Chaperonin GroEL 1 (541 aa).

ATP contacts are provided by residues 29–32, 86–90, glycine 413, 478–480, and aspartate 494; these read TLGP, DGTTT, and NAA. A disordered region spans residues 520–541; it reads VVEKPAEAEDDGHGHGHGHHHH. Over residues 523-533 the composition is skewed to basic and acidic residues; that stretch reads KPAEAEDDGHG.

Belongs to the chaperonin (HSP60) family. As to quaternary structure, forms a cylinder of 14 subunits composed of two heptameric rings stacked back-to-back. Interacts with the co-chaperonin GroES.

The protein resides in the cytoplasm. It carries out the reaction ATP + H2O + a folded polypeptide = ADP + phosphate + an unfolded polypeptide.. Together with its co-chaperonin GroES, plays an essential role in assisting protein folding. The GroEL-GroES system forms a nano-cage that allows encapsulation of the non-native substrate proteins and provides a physical environment optimized to promote and accelerate protein folding. This Mycolicibacterium gilvum (strain PYR-GCK) (Mycobacterium gilvum (strain PYR-GCK)) protein is Chaperonin GroEL 1.